The primary structure comprises 938 residues: Translation initiation factor IF-2 (938 aa).

Basic and acidic residues predominate over residues 57–205; it reads DKSKKVASKE…PKSEETKSEE (149 aa). The disordered stretch occupies residues 57–350; sequence DKSKKVASKE…RSADDLAQQE (294 aa). Positions 206–215 are enriched in acidic residues; sequence TTEGGESEEK. Over residues 248 to 259 the composition is skewed to basic and acidic residues; sequence KKEEKKEDDKKD. 2 stretches are compositionally biased toward basic residues: residues 260–270 and 285–296; these read KDRRKKRRRRI and GAKKGGRTRSKP. The segment covering 297-319 has biased composition (basic and acidic residues); the sequence is ITKEEPTEEEVQKQVRETLEKLQ. Over residues 323–333 the composition is skewed to basic residues; the sequence is SKGKGAKYRRQ. Residues 334 to 344 are compositionally biased toward basic and acidic residues; that stretch reads KRDEHRQRSAD. Residues 434-602 enclose the tr-type G domain; that stretch reads TRAPIVTVMG…KVLLEAEILE (169 aa). The interval 443 to 450 is G1; sequence GHVDHGKT. 443–450 is a binding site for GTP; that stretch reads GHVDHGKT. The segment at 468–472 is G2; it reads GITQH. The G3 stretch occupies residues 490 to 493; that stretch reads DTPG. Residues 490-494 and 544-547 contribute to the GTP site; these read DTPGH and NKSD. The tract at residues 544–547 is G4; it reads NKSD. The tract at residues 580–582 is G5; the sequence is SAK.

Belongs to the TRAFAC class translation factor GTPase superfamily. Classic translation factor GTPase family. IF-2 subfamily.

It is found in the cytoplasm. In terms of biological role, one of the essential components for the initiation of protein synthesis. Protects formylmethionyl-tRNA from spontaneous hydrolysis and promotes its binding to the 30S ribosomal subunits. Also involved in the hydrolysis of GTP during the formation of the 70S ribosomal complex. This Christiangramia forsetii (strain DSM 17595 / CGMCC 1.15422 / KT0803) (Gramella forsetii) protein is Translation initiation factor IF-2.